The primary structure comprises 533 residues: Undecaprenyl phosphate-alpha-4-amino-4-deoxy-L-arabinose arabinosyl transferase (533 aa).

The next 13 membrane-spanning stretches (helical) occupy residues 10-30 (LLLAAFLLAYLLPLGFHGLWI), 64-84 (PAGYWLIALGQAVFGENLFGV), 86-106 (IASAISTGLSVLLAYLLAGKI), 113-133 (SFASALLFMSFGFVAGQAGYS), 137-157 (PQFTLWTNLTLVAFWYAVHSI), 170-190 (VACGMGFMTKGFLAWALPAII), 207-227 (FGPLAVVIAIAVCLPWALAVH), 257-277 (WWFYLPLLIAACLPWALLLPV), 290-310 (DTAFLLLWLVLPLAFLSLSKG), 312-332 (LPTYILPCLLPLALLMADALV), 345-365 (VNGIVNAALTFLGLLALIYVQ), 377-397 (HLLLAVIVLTGWTLTNALQGI), and 402-422 (FWALPAVGSWLLIVLLPAALP).

It belongs to the glycosyltransferase 83 family.

The protein resides in the cell inner membrane. It catalyses the reaction 4-amino-4-deoxy-alpha-L-arabinopyranosyl di-trans,octa-cis-undecaprenyl phosphate + lipid IVA = lipid IIA + di-trans,octa-cis-undecaprenyl phosphate.. It participates in lipopolysaccharide metabolism; 4-amino-4-deoxy-beta-L-arabinose-lipid A biosynthesis. Functionally, catalyzes the transfer of the L-Ara4N moiety of the glycolipid undecaprenyl phosphate-alpha-L-Ara4N to lipid A. The modified arabinose is attached to lipid A and is required for resistance to polymyxin and cationic antimicrobial peptides. The protein is Undecaprenyl phosphate-alpha-4-amino-4-deoxy-L-arabinose arabinosyl transferase of Pseudomonas savastanoi pv. phaseolicola (strain 1448A / Race 6) (Pseudomonas syringae pv. phaseolicola (strain 1448A / Race 6)).